A 420-amino-acid polypeptide reads, in one-letter code: MGQSPSPRSPHGSPPTLSTLTLLLLLCGQAHSQCKILRCNAEYVSSTLSLRGGGSPDTPRGGGRGGLASGGLCRALRSYALCTRRTARTCRGDLAFHSAVHGIEDLMIQHNCSRQGPTAPPPARGPALPGAGPAPLTPDPCDYEARFSRLHGRAPGFLHCASFGDPHVRSFHNQFHTCRVQGAWPLLDNDFLFVQATSSPVSSGANATTIRKITIIFKNMQECIDQKVYQAEVDNLPAAFEDGSINGGDRPGGSSLSIQTANLGSHVEIRAAYIGTTIIIRQTAGQLSFSIRVAEDVARAFSAEQDLQLCVGGCPPSQRLSRSERNRRGAIAIDTARRLCKEGLPVEDAYFQSCVFDVSVSGDPNFTVAAQTALDDARIFLTDLENLHLFPSDAGPPLSPAICLVPLLSALFVLWLCFSK.

Positions 1–32 are cleaved as a signal peptide; the sequence is MGQSPSPRSPHGSPPTLSTLTLLLLLCGQAHS. Tyr-43 is modified (phosphotyrosine). A glycan (N-linked (GlcNAc...) asparagine) is linked at Asn-111. Residues 113–135 form a disordered region; sequence SRQGPTAPPPARGPALPGAGPAP. Positions 125–134 are enriched in low complexity; that stretch reads GPALPGAGPA. 2 disulfide bridges follow: Cys-141/Cys-223 and Cys-160/Cys-310. Residues Asn-206 and Asn-365 are each glycosylated (N-linked (GlcNAc...) asparagine). Residue Asp-393 is the site of GPI-anchor amidated aspartate attachment. Positions 394-420 are cleaved as a propeptide — removed in mature form; the sequence is AGPPLSPAICLVPLLSALFVLWLCFSK.

The protein belongs to the repulsive guidance molecule (RGM) family. Interacts with BMP2 and BMP4. Interacts with BMP6. Interacts with BMPR1B. Interacts with TMPRSS6. Post-translationally, autocatalytically cleaved at low pH; the two chains remain linked via two disulfide bonds. Also proteolytically processed by TMPRSS6, several fragments being released in the extracellular space; regulates HJV activity in BMP signaling and thefore iron homeostasis. Muscle cell lineage.

The protein localises to the cell membrane. In terms of biological role, acts as a bone morphogenetic protein (BMP) coreceptor. Through enhancement of BMP signaling regulates hepcidin (HAMP) expression and regulates iron homeostasis. This is Hemojuvelin from Mus musculus (Mouse).